Reading from the N-terminus, the 69-residue chain is Probable molybdenum-pterin-binding protein (69 aa).

Residues 2–68 (KISARNQLKG…IKATSVMVGV (67 aa)) form the Mop domain.

It to C.pasteurianum MOP proteins.

Functionally, binds one mole of molybdenum per mole of protein and contains a pterin. In Haemophilus influenzae (strain ATCC 51907 / DSM 11121 / KW20 / Rd), this protein is Probable molybdenum-pterin-binding protein.